The sequence spans 425 residues: Aspartic protease 2 (425 aa).

The N-terminal stretch at Met-1–Ala-16 is a signal peptide. The Peptidase A1 domain maps to Tyr-72–Ala-421. Asp-90 is an active-site residue. Cysteines 103 and 145 form a disulfide. N-linked (GlcNAc...) asparagine glycosylation is found at Asn-163, Asn-197, and Asn-304. Residue Asp-316 is part of the active site. Cys-351 and Cys-382 are joined by a disulfide. N-linked (GlcNAc...) asparagine glycosylation is found at Asn-354 and Asn-365.

This sequence belongs to the peptidase A1 family. Cleaved into a mature form. Expressed in intestine, amphidal glands and excretory gland (at protein level).

The protein resides in the secreted. Inhibited by pepstatin A. Its function is as follows. Aspartic protease which cleaves several human serum proteins including hemoglobin, fibrinogen and albumin. Appears to cleave preferentially between P1 (Ala, Leu, Val, Phe and Gly) and P1' (Ala and Leu) residues. This is Aspartic protease 2 from Necator americanus (Human hookworm).